Here is a 2769-residue protein sequence, read N- to C-terminus: Thyroglobulin (2769 aa).

The first 19 residues, 1–19 (MALALWVFGLLDLICLASA), serve as a signal peptide directing secretion. Tyr24 is modified (iodotyrosine; alternate). At Tyr24 the chain carries Sulfotyrosine; alternate. The residue at position 24 (Tyr24) is a Thyroxine; alternate. The residue at position 24 (Tyr24) is a Triiodothyronine; alternate. 4 Thyroglobulin type-1 domains span residues 31–92 (LRPC…PAAC), 93–160 (LSFC…PARC), 161–297 (PRSC…RFRC), and 298–358 (PTKC…PPSC). 8 cysteine pairs are disulfide-bonded: Cys34–Cys52, Cys63–Cys70, Cys72–Cys92, Cys96–Cys120, Cys131–Cys138, Cys140–Cys160, Cys164–Cys183, and Cys194–Cys235. An Iodotyrosine modification is found at Tyr108. N-linked (GlcNAc...) (complex) asparagine; alternate glycosylation occurs at Asn110. A glycan (N-linked (GlcNAc...) (hybrid) asparagine; alternate) is linked at Asn110. Iodotyrosine; alternate is present on Tyr149. A Diiodotyrosine; alternate modification is found at Tyr149. Residues Tyr234 and Tyr258 each carry the iodotyrosine modification. Cystine bridges form between Cys301-Cys319, Cys330-Cys336, Cys338-Cys358, Cys364-Cys619, Cys408-Cys607, Cys630-Cys635, Cys637-Cys657, Cys661-Cys686, and Cys697-Cys702. N-linked (GlcNAc...) (complex) asparagine; alternate glycans are attached at residues Asn483 and Asn495. N-linked (GlcNAc...) (hybrid) asparagine; alternate glycosylation is found at Asn483 and Asn495. Thyroglobulin type-1 domains are found at residues 604 to 657 (SQGC…RPRC), 658 to 725 (PTEC…PKKC), 726 to 921 (PSPC…VPAC), 922 to 1073 (PGSC…IPQC), 1074 to 1145 (PTSC…SAQC), and 1146 to 1210 (PSLC…QPAC). An Iodotyrosine; alternate modification is found at Tyr703. Tyr703 carries the thyroxine; alternate modification. Tyr703 is modified (triiodothyronine; alternate). Diiodotyrosine; alternate is present on Tyr703. Cystine bridges form between Cys704–Cys725, Cys729–Cys762, Cys773–Cys898, Cys900–Cys921, Cys925–Cys1031, Cys1042–Cys1049, Cys1051–Cys1073, Cys1077–Cys1108, Cys1126–Cys1145, Cys1149–Cys1169, Cys1181–Cys1188, Cys1190–Cys1210, Cys1215–Cys1264, Cys1231–Cys1245, Cys1306–Cys1356, and Cys1331–Cys1347. An Iodotyrosine modification is found at Tyr784. Asn853 is a glycosylation site (N-linked (GlcNAc...) (complex) asparagine; alternate). N-linked (GlcNAc...) (hybrid) asparagine; alternate glycosylation occurs at Asn853. An Iodotyrosine; alternate modification is found at Tyr866. Tyr866 carries the post-translational modification Diiodotyrosine; alternate. Tyr883 bears the Diiodotyrosine mark. Asn947 carries N-linked (GlcNAc...) (complex) asparagine; alternate glycosylation. Asn947 carries N-linked (GlcNAc...) (hybrid) asparagine; alternate glycosylation. Tyr992 carries the post-translational modification Iodotyrosine; alternate. Tyr992 carries the post-translational modification Diiodotyrosine; alternate. N-linked (GlcNAc...) (complex) asparagine; alternate glycosylation occurs at Asn1140. A glycan (N-linked (GlcNAc...) (hybrid) asparagine; alternate) is linked at Asn1140. Tyr1310 bears the Iodotyrosine mark. Tyr1310 carries the post-translational modification Thyroxine. Asn1365 carries an N-linked (GlcNAc...) (high mannose) asparagine glycan. Disulfide bonds link Cys1441/Cys1461, Cys1464/Cys1475, Cys1478/Cys1492, Cys1495/Cys1512, Cys1516/Cys1525, Cys1545/Cys1567, Cys1605/Cys1629, Cys1609/Cys1615, Cys1641/Cys1664, Cys1726/Cys1751, Cys1730/Cys1736, Cys1735/Cys1836, and Cys1762/Cys1779. Type II repeat units follow at residues 1458–1471 (ALGC…SYFQ), 1472–1488 (DEQC…EQAG), and 1489–1505 (SLAC…VYAG). Residue Tyr1469 is modified to Iodotyrosine; alternate. The residue at position 1469 (Tyr1469) is a Diiodotyrosine; alternate. Positions 1513 to 1567 (VTDCQKNEVGLQCDQDSQYRASQRDRTSGKAFCVDGEGRRLPWTEAEAPLVDAQC) constitute a Thyroglobulin type-1 11 domain. The stretch at 1605–1725 (CLADCALDEA…GASLAEVHLF (121 aa)) is one Type IIIA repeat. One copy of the Type IIIB repeat lies at 1726-1893 (CLLACDHDSC…LFSLQQANLW (168 aa)). N-linked (GlcNAc...) (complex) asparagine; alternate glycosylation is present at Asn1776. Asn1776 carries an N-linked (GlcNAc...) (hybrid) asparagine; alternate glycan. Positions 1827 to 1842 (MGSRSESMGCRRDTEP) are enriched in basic and acidic residues. The interval 1827–1851 (MGSRSESMGCRRDTEPRPASPSETD) is disordered. N-linked (GlcNAc...) (complex) asparagine; alternate glycosylation occurs at Asn1870. Asn1870 carries an N-linked (GlcNAc...) (hybrid) asparagine; alternate glycan. 7 disulfides stabilise this stretch: Cys1894-Cys1920, Cys1898-Cys1905, Cys1929-Cys1940, Cys1997-Cys2025, Cys2001-Cys2007, Cys2006-Cys2077, and Cys2036-Cys2049. One copy of the Type IIIA repeat lies at 1894–1996 (CLSRCAGEPS…DKSISSGFFE (103 aa)). The Type IIIB repeat unit spans residues 1997–2130 (CERLCDMDPC…VGNFSAARDR (134 aa)). N-linked (GlcNAc...) (high mannose) asparagine glycosylation is present at Asn2014. Residue Asn2123 is glycosylated (N-linked (GlcNAc...) (high mannose) asparagine). Intrachain disulfides connect Cys2131/Cys2155, Cys2135/Cys2141, and Cys2164/Cys2173. A Type IIIA repeat occupies 2131–2188 (CLWECSRHQDCLVTTLQTQPGAVRCMFYADTQSCTHSLQAQNCRLLLHEEATYIYRKP). Tyr2185 is subject to Iodotyrosine. A cholinesterase-like (ChEL) region spans residues 2189 to 2769 (NIPLPGFGTS…PELASKTYSK (581 aa)). Residue Asn2251 is glycosylated (N-linked (GlcNAc...) (complex) asparagine; alternate). A glycan (N-linked (GlcNAc...) (hybrid) asparagine; alternate) is linked at Asn2251. The N-linked (GlcNAc...) (high mannose) asparagine glycan is linked to Asn2296. Cys2443 and Cys2454 are disulfide-bonded. Tyr2541 is modified (thyroxine). Tyr2574 bears the Iodotyrosine; alternate mark. Residue Tyr2574 is modified to Thyroxine; alternate. Tyr2574 bears the Triiodothyronine; alternate mark. The residue at position 2574 (Tyr2574) is a Diiodotyrosine; alternate. Iodotyrosine occurs at positions 2588 and 2618. Residues Cys2592 and Cys2716 are joined by a disulfide bond. Tyr2698 carries the diiodotyrosine modification. The disordered stretch occupies residues 2730 to 2769 (ADETKDGPSADSEEEDQPAGSGLTEDLLGLPELASKTYSK). Tyr2767 bears the Iodotyrosine; alternate mark. Tyr2767 bears the Thyroxine; alternate mark. Tyr2767 is modified (triiodothyronine; alternate). A Diiodotyrosine; alternate modification is found at Tyr2767.

Belongs to the type-B carboxylesterase/lipase family. Monomer. Homodimer (via ChEL region); occurs in the endoplasmic reticulum and is required for export to the Golgi apparatus. Homooligomer; disulfide-linked; stored in this form in the thyroid follicle lumen. Iodinated on tyrosine residues by TPO. There are 4 pairs of iodinated tyrosines used for coupling: acceptor Tyr-24 is coupled to donor Tyr-149 or Tyr-234, acceptor Tyr-2574 is coupled to donor Tyr-2541, acceptor Tyr-2767 in monomer 1 is coupled to donor Tyr-2767 in monomer 2 and acceptor Tyr-1310 in monomer 1 is coupled to donor Tyr-108 in monomer 2. In terms of processing, sulfated tyrosines are desulfated during iodination. Post-translationally, undergoes sequential proteolysis by cathepsins to release thyroxine (T4) and triiodothyronine (T3) hormones. In the thyroid follicle lumen, cross-linked TG (storage form) is solubilized by limited proteolysis mediated by cathepsins CTSB and/or CTSL. Partially cleaved TG is further processed by CTSK/cathepsin K and/or CTSL resulting in the release of T4. Following endocytosis, further processing occurs leading to the release of T3 and more T4 hormones. As to expression, specifically expressed in the thyroid gland.

The protein localises to the secreted. In terms of biological role, acts as a substrate for the production of iodinated thyroid hormones thyroxine (T4) and triiodothyronine (T3). The synthesis of T3 and T4 involves iodination of selected tyrosine residues of TG/thyroglobulin followed by their oxidative coupling. Following TG re-internalization and lysosomal-mediated proteolysis, T3 and T4 are released from the polypeptide backbone leading to their secretion into the bloodstream. One dimer produces 7 thyroid hormone molecules. The chain is Thyroglobulin (TG) from Bos taurus (Bovine).